The chain runs to 131 residues: Large ribosomal subunit protein bL12 (131 aa).

The protein belongs to the bacterial ribosomal protein bL12 family. Homodimer. Part of the ribosomal stalk of the 50S ribosomal subunit. Forms a multimeric L10(L12)X complex, where L10 forms an elongated spine to which 2 to 4 L12 dimers bind in a sequential fashion. Binds GTP-bound translation factors.

In terms of biological role, forms part of the ribosomal stalk which helps the ribosome interact with GTP-bound translation factors. Is thus essential for accurate translation. This is Large ribosomal subunit protein bL12 from Parasynechococcus marenigrum (strain WH8102).